Reading from the N-terminus, the 156-residue chain is SsrA-binding protein (156 aa).

The protein belongs to the SmpB family.

The protein localises to the cytoplasm. In terms of biological role, required for rescue of stalled ribosomes mediated by trans-translation. Binds to transfer-messenger RNA (tmRNA), required for stable association of tmRNA with ribosomes. tmRNA and SmpB together mimic tRNA shape, replacing the anticodon stem-loop with SmpB. tmRNA is encoded by the ssrA gene; the 2 termini fold to resemble tRNA(Ala) and it encodes a 'tag peptide', a short internal open reading frame. During trans-translation Ala-aminoacylated tmRNA acts like a tRNA, entering the A-site of stalled ribosomes, displacing the stalled mRNA. The ribosome then switches to translate the ORF on the tmRNA; the nascent peptide is terminated with the 'tag peptide' encoded by the tmRNA and targeted for degradation. The ribosome is freed to recommence translation, which seems to be the essential function of trans-translation. Required for trans-translation. Probably required for sporulation; deletion of the gene for tmRNA impairs sporulation via its effect on trans-translation, and as smpB is required for trans-translation under non-stress conditions, it is also probably required during sporulation. This chain is SsrA-binding protein, found in Bacillus subtilis (strain 168).